We begin with the raw amino-acid sequence, 137 residues long: Large-conductance mechanosensitive channel (137 aa).

Transmembrane regions (helical) follow at residues 9–29 (AFAV…GAAF) and 79–99 (IQTI…VKAI).

The protein belongs to the MscL family. In terms of assembly, homopentamer.

Its subcellular location is the cell inner membrane. Its function is as follows. Channel that opens in response to stretch forces in the membrane lipid bilayer. May participate in the regulation of osmotic pressure changes within the cell. In Pseudomonas paraeruginosa (strain DSM 24068 / PA7) (Pseudomonas aeruginosa (strain PA7)), this protein is Large-conductance mechanosensitive channel.